The sequence spans 227 residues: Uracil-DNA glycosylase (227 aa).

Asp65 (proton acceptor) is an active-site residue.

Belongs to the uracil-DNA glycosylase (UDG) superfamily. UNG family.

It localises to the cytoplasm. It catalyses the reaction Hydrolyzes single-stranded DNA or mismatched double-stranded DNA and polynucleotides, releasing free uracil.. Its function is as follows. Excises uracil residues from the DNA which can arise as a result of misincorporation of dUMP residues by DNA polymerase or due to deamination of cytosine. The protein is Uracil-DNA glycosylase of Lactobacillus delbrueckii subsp. bulgaricus (strain ATCC BAA-365 / Lb-18).